Here is a 996-residue protein sequence, read N- to C-terminus: Low-density lipoprotein receptor-related protein 8 (996 aa).

Residues 1–28 (MGRPELGALRPLALLLLLLLQLQHLSAA) form the signal peptide. The Extracellular segment spans residues 29–858 (DPLPGGQGPV…GSQMGSTVTA (830 aa)). 8 LDL-receptor class A domains span residues 40 to 76 (ECEE…DDCP), 79 to 117 (TCAD…ATCS), 120 to 158 (ECPA…AGCP), 160 to 196 (LCAP…RGCS), 199 to 238 (ACPP…ELCG), 250 to 287 (ACAP…ADCS), 290 to 326 (PCRE…AGCL), and 330 to 369 (TCEG…KVCG). Cystine bridges form between Cys41-Cys53, Cys48-Cys66, Cys60-Cys75, Cys80-Cys92, Cys87-Cys105, Cys99-Cys116, Cys121-Cys135, Cys128-Cys148, Cys142-Cys157, Cys161-Cys173, Cys168-Cys186, Cys180-Cys195, Cys200-Cys213, Cys207-Cys226, Cys220-Cys237, Cys251-Cys264, Cys259-Cys277, Cys271-Cys286, Cys291-Cys303, Cys298-Cys316, Cys310-Cys325, Cys331-Cys344, Cys339-Cys357, Cys351-Cys368, Cys373-Cys384, Cys380-Cys393, Cys395-Cys407, Cys413-Cys423, Cys419-Cys432, and Cys434-Cys447. Ca(2+)-binding residues include Trp58, Asp61, Asp63, Asp65, Asp71, and Glu72. N-linked (GlcNAc...) asparagine glycosylation is present at Asn170. The 45-residue stretch at 364–408 (PQKVCGLNECLHNNGGCSHICTDLKIGFECTCPAGFQLLDQKTCG) folds into the EGF-like 1 domain. Positions 409 to 448 (DIDECQDPDACSQICVNYKGYFKCECHPGYEMDTLTKNCK) constitute an EGF-like 2; calcium-binding domain. LDL-receptor class B repeat units lie at residues 495-541 (NRIY…DWVH), 542-584 (KHIY…DPLR), 585-628 (GFMY…DLLS), 629-671 (QRLY…AVFE), and 672-714 (DKVF…FHEL). Asn551 carries an N-linked (GlcNAc...) asparagine glycan. The tract at residues 773-831 (STSTTTLASAMTRTVPATTRAPGTTIHDPTYQNHSTETPSQTAAAPHSVNVPRAPSTSP) is clustered O-linked oligosaccharides. Residues 778–851 (TLASAMTRTV…SQHYGNEGSQ (74 aa)) form a disordered region. Polar residues predominate over residues 802–815 (TYQNHSTETPSQTA). Asn805 is a glycosylation site (N-linked (GlcNAc...) asparagine). Low complexity predominate over residues 824–839 (PRAPSTSPSTPSPATS). N-linked (GlcNAc...) asparagine glycosylation occurs at Asn840. Residues 840 to 851 (NHSQHYGNEGSQ) are compositionally biased toward polar residues. Residues 859–881 (AVIGVIVPIVVIALLCMSGYLIW) traverse the membrane as a helical segment. Residues 882-996 (RNWKRKNTKS…ALSLEDDGLP (115 aa)) are Cytoplasmic-facing.

It belongs to the LDLR family. Homooligomer. Interacts with VLDLR. Reelin associates with two or more receptor molecules. Interacts with DAB1 and JNK-interacting proteins. Interacts with SNX17. Interacts with PCSK9. Interacts with MDK; this interaction is calcium dependent. Interacts with CLU. In terms of processing, O-glycosylated. Some alternatively spliced isoforms lack the O-linked sugar domain. Post-translationally, undergoes sequential, furin and gamma-secretase dependent, proteolytic processing, resulting in the extracellular release of the entire ligand-binding domain as a soluble polypeptide and in the intracellular domain (ICD) release into the cytoplasm. The gamma-secretase-dependent proteolytical processing occurs after the bulk of the extracellular domain has been shed, in a furin-dependent manner, in alternatively spliced isoforms carrying the furin cleavage site. Hypoglycosylation (mainly hypo-O-glycosylation) leads to increased extracellular cleavage, which in turn results in accelerating release of the intracellular domain (ICD) by the gamma-secretase. The resulting receptor fragment is able to inhibit Reelin signaling and in particular the Reelin-induced DAB1 phosphorylation. Tyrosine phosphorylated upon apoE binding. In terms of processing, ubiquitinated by MYLIP leading to degradation. As to expression, expressed in neurons throughout the brain, with strong expression in pyramidal neurons of the hippocampus, granule cells of the dentate gyrus, cortical neurons and Purkinje cells of the cerebellum. Also expressed in the epithelium of the choroid plexus and of the blood vessels (apical expression), as well as in the epididymis.

The protein resides in the cell membrane. Its subcellular location is the secreted. Cell surface receptor for Reelin (RELN) and apolipoprotein E (apoE)-containing ligands. LRP8 participates in transmitting the extracellular Reelin signal to intracellular signaling processes, by binding to DAB1 on its cytoplasmic tail. Reelin acts via both the VLDL receptor (VLDLR) and LRP8 to regulate DAB1 tyrosine phosphorylation and microtubule function in neurons. LRP8 has higher affinity for Reelin than VLDLR. LRP8 is thus a key component of the Reelin pathway which governs neuronal layering of the forebrain during embryonic brain development. Binds the endoplasmic reticulum resident receptor-associated protein (RAP). Binds dimers of beta 2-glycoprotein I and may be involved in the suppression of platelet aggregation in the vasculature. Highly expressed in the initial segment of the epididymis, where it affects the functional expression of clusterin and phospholipid hydroperoxide glutathione peroxidase (PHGPx), two proteins required for sperm maturation. May also function as an endocytic receptor. Not required for endocytic uptake of SEPP1 in the kidney which is mediated by LRP2. Together with its ligand, apolipoprotein E (apoE), may indirectly play a role in the suppression of the innate immune response by controlling the survival of myeloid-derived suppressor cells. This Mus musculus (Mouse) protein is Low-density lipoprotein receptor-related protein 8 (Lrp8).